We begin with the raw amino-acid sequence, 365 residues long: 3-dehydroquinate synthase (365 aa).

Residues 106-110 (GVIGD), 130-131 (TT), Lys-142, Lys-151, and 169-172 (FFAT) each bind NAD(+). Glu-184, His-247, and His-264 together coordinate Zn(2+).

The protein belongs to the sugar phosphate cyclases superfamily. Dehydroquinate synthase family. NAD(+) serves as cofactor. Requires Co(2+) as cofactor. It depends on Zn(2+) as a cofactor.

The protein resides in the cytoplasm. The enzyme catalyses 7-phospho-2-dehydro-3-deoxy-D-arabino-heptonate = 3-dehydroquinate + phosphate. It functions in the pathway metabolic intermediate biosynthesis; chorismate biosynthesis; chorismate from D-erythrose 4-phosphate and phosphoenolpyruvate: step 2/7. Catalyzes the conversion of 3-deoxy-D-arabino-heptulosonate 7-phosphate (DAHP) to dehydroquinate (DHQ). In Listeria monocytogenes serovar 1/2a (strain ATCC BAA-679 / EGD-e), this protein is 3-dehydroquinate synthase.